A 529-amino-acid polypeptide reads, in one-letter code: Aldehyde dehydrogenase 1 (529 aa).

Gly-251–Gly-256 lines the NAD(+) pocket. Active-site residues include Glu-273 and Cys-307.

Belongs to the aldehyde dehydrogenase family.

The enzyme catalyses an aldehyde + NAD(+) + H2O = a carboxylate + NADH + 2 H(+). The sequence is that of Aldehyde dehydrogenase 1 from Entamoeba histolytica (strain ATCC 30459 / HM-1:IMSS / ABRM).